We begin with the raw amino-acid sequence, 209 residues long: Uracil phosphoribosyltransferase (209 aa).

Residues Arg-79, Arg-104, and 131–139 each bind 5-phospho-alpha-D-ribose 1-diphosphate; that span reads DPMLATGNS. Uracil-binding positions include Ile-194 and 199–201; that span reads GDA. A 5-phospho-alpha-D-ribose 1-diphosphate-binding site is contributed by Asp-200.

The protein belongs to the UPRTase family. Mg(2+) is required as a cofactor.

It catalyses the reaction UMP + diphosphate = 5-phospho-alpha-D-ribose 1-diphosphate + uracil. Its pathway is pyrimidine metabolism; UMP biosynthesis via salvage pathway; UMP from uracil: step 1/1. Its activity is regulated as follows. Allosterically activated by GTP. Catalyzes the conversion of uracil and 5-phospho-alpha-D-ribose 1-diphosphate (PRPP) to UMP and diphosphate. This chain is Uracil phosphoribosyltransferase, found in Acidovorax ebreus (strain TPSY) (Diaphorobacter sp. (strain TPSY)).